A 447-amino-acid chain; its full sequence is MTKQIITLVGRPNVGKSTLFNRLSIRKKAIVHDLPGVTRDRKYTDGKIGSFEFLLIDTPGLDENPNSMGERLIEQTTKAILEADLICFMVDGRSGILPDDKLLSSFVRKYNKPAILVVNKCEKAFDFDKEYYKLGFDSMIAISAEHGTGLIDLYDEIIAKLPEEESIETNIADPIKGDCLQIVVSGRPNAGKSTFINALINDERLLTGPEAGITRESIEIDWQYKNNHIKLIDTAGLRKKSTITESLEKLSASDTINSIKFANTVILMIDALAPLKQQDLNIASHVVNEGRSIVIVVNKWDLVKESEKEAFQEEFYYQINTHLPQVKGIPVLFISAINKQNIEQVLDACLKIYKIWNKKITTSKLNEWLNFTTKAHLLPLQKGGRRVRVKYMTQTKTRPPTFKLFSNNPEKITDSYTRYLVNNMREAFDMPGIPIRFIYVKTKNPYV.

2 consecutive EngA-type G domains span residues 4–165 and 180–357; these read QIIT…PEEE and LQIV…KIWN. Residues 10 to 17, 57 to 61, 119 to 122, 186 to 193, 233 to 237, and 298 to 301 each bind GTP; these read GRPNVGKS, DTPGL, NKCE, GRPNAGKS, DTAGL, and NKWD. The 86-residue stretch at 358-443 folds into the KH-like domain; that stretch reads KKITTSKLNE…PIRFIYVKTK (86 aa).

The protein belongs to the TRAFAC class TrmE-Era-EngA-EngB-Septin-like GTPase superfamily. EngA (Der) GTPase family. In terms of assembly, associates with the 50S ribosomal subunit.

Functionally, GTPase that plays an essential role in the late steps of ribosome biogenesis. The chain is GTPase Der from Rickettsia peacockii (strain Rustic).